A 373-amino-acid polypeptide reads, in one-letter code: Dual-specificity RNA methyltransferase RlmN (373 aa).

The active-site Proton acceptor is the E94. Residues 100 to 339 (EEDRATLCVS…VIVRKTRGDD (240 aa)) form the Radical SAM core domain. C107 and C344 are joined by a disulfide. Residues C114, C118, and C121 each coordinate [4Fe-4S] cluster. S-adenosyl-L-methionine contacts are provided by residues 168-169 (GE), S200, 222-224 (SIH), and N301. The S-methylcysteine intermediate role is filled by C344.

Belongs to the radical SAM superfamily. RlmN family. [4Fe-4S] cluster serves as cofactor.

The protein resides in the cytoplasm. The catalysed reaction is adenosine(2503) in 23S rRNA + 2 reduced [2Fe-2S]-[ferredoxin] + 2 S-adenosyl-L-methionine = 2-methyladenosine(2503) in 23S rRNA + 5'-deoxyadenosine + L-methionine + 2 oxidized [2Fe-2S]-[ferredoxin] + S-adenosyl-L-homocysteine. It catalyses the reaction adenosine(37) in tRNA + 2 reduced [2Fe-2S]-[ferredoxin] + 2 S-adenosyl-L-methionine = 2-methyladenosine(37) in tRNA + 5'-deoxyadenosine + L-methionine + 2 oxidized [2Fe-2S]-[ferredoxin] + S-adenosyl-L-homocysteine. Functionally, specifically methylates position 2 of adenine 2503 in 23S rRNA and position 2 of adenine 37 in tRNAs. m2A2503 modification seems to play a crucial role in the proofreading step occurring at the peptidyl transferase center and thus would serve to optimize ribosomal fidelity. In Shewanella frigidimarina (strain NCIMB 400), this protein is Dual-specificity RNA methyltransferase RlmN.